We begin with the raw amino-acid sequence, 108 residues long: uncharacterized protein (108 aa).

Residues 1–22 (MMIKQCVICLSLLVFGTTAAHA) form the signal peptide.

This is an uncharacterized protein from Bacillus subtilis (strain 168).